Consider the following 809-residue polypeptide: Zygotic DNA replication licensing factor mcm3 (809 aa).

The MCM domain maps to 297–504 (IFEQLSRSLA…QDREISDHVL (208 aa)). Residue 347-354 (GDPSVAKS) coordinates ATP. Residues 479–482 (SRFD) carry the Arginine finger motif. A disordered region spans residues 664 to 741 (KKRRRRDEDS…TDSSAKPGLS (78 aa)). The span at 696–705 (AQEGESHDPY) shows a compositional bias: basic and acidic residues.

The protein belongs to the MCM family. In terms of assembly, component of the mcm2-7 complex (RLF-M). The complex forms a toroidal hexameric ring with the proposed subunit order mcm2-mcm6-mcm4-mcm7-mcm3-mcm5. Component of the CMG helicase complex, composed of the mcm2-7 complex, the GINS complex and cdc45.

Its subcellular location is the nucleus. It is found in the chromosome. The catalysed reaction is ATP + H2O = ADP + phosphate + H(+). Acts as a component of the MCM2-7 complex (MCM complex) which is the putative replicative helicase essential for 'once per cell cycle' DNA replication initiation and elongation in eukaryotic cells. The active ATPase sites in the MCM2-7 ring are formed through the interaction surfaces of two neighboring subunits such that a critical structure of a conserved arginine finger motif is provided in trans relative to the ATP-binding site of the Walker A box of the adjacent subunit. The six ATPase active sites, however, are likely to contribute differentially to the complex helicase activity. The existence of maternal and zygotic forms of mcm3 and mcm6 suggests that specific forms of mcm2-7 complexes may be used during different stages of development. In Xenopus tropicalis (Western clawed frog), this protein is Zygotic DNA replication licensing factor mcm3 (zmcm3).